Reading from the N-terminus, the 130-residue chain is Small ribosomal subunit protein uS8 (130 aa).

It belongs to the universal ribosomal protein uS8 family. Part of the 30S ribosomal subunit.

Functionally, one of the primary rRNA binding proteins, it binds directly to 16S rRNA central domain where it helps coordinate assembly of the platform of the 30S subunit. The chain is Small ribosomal subunit protein uS8 from Methanobrevibacter smithii (strain ATCC 35061 / DSM 861 / OCM 144 / PS).